The chain runs to 607 residues: Elongation factor 4 (607 aa).

In terms of domain architecture, tr-type G spans S11–A193. GTP contacts are provided by residues D23–T28 and N140–D143.

Belongs to the TRAFAC class translation factor GTPase superfamily. Classic translation factor GTPase family. LepA subfamily.

It is found in the cell membrane. The catalysed reaction is GTP + H2O = GDP + phosphate + H(+). Its function is as follows. Required for accurate and efficient protein synthesis under certain stress conditions. May act as a fidelity factor of the translation reaction, by catalyzing a one-codon backward translocation of tRNAs on improperly translocated ribosomes. Back-translocation proceeds from a post-translocation (POST) complex to a pre-translocation (PRE) complex, thus giving elongation factor G a second chance to translocate the tRNAs correctly. Binds to ribosomes in a GTP-dependent manner. This chain is Elongation factor 4, found in Bacillus cereus (strain ATCC 14579 / DSM 31 / CCUG 7414 / JCM 2152 / NBRC 15305 / NCIMB 9373 / NCTC 2599 / NRRL B-3711).